A 387-amino-acid chain; its full sequence is Galanin receptor type 2 (387 aa).

Residues 1-28 lie on the Extracellular side of the membrane; that stretch reads MNVSGCPGAGNASQAGGGGGWHPEAVIV. N-linked (GlcNAc...) asparagine glycans are attached at residues Asn-2 and Asn-11. The chain crosses the membrane as a helical span at residues 29–49; the sequence is PLLFALIFLVGTVGNTLVLAV. Topologically, residues 50-60 are cytoplasmic; the sequence is LLRGGQAVSTT. A helical membrane pass occupies residues 61–81; sequence NLFILNLGVADLCFILCCVPF. The Extracellular segment spans residues 82 to 99; the sequence is QATIYTLDGWVFGSLLCK. An intrachain disulfide couples Cys-98 to Cys-175. A helical membrane pass occupies residues 100–121; the sequence is AVHFLIFLTMHASSFTLAAVSL. At 122 to 141 the chain is on the cytoplasmic side; sequence DRYLAIRYPLHSRELRTPRN. The helical transmembrane segment at 142 to 162 threads the bilayer; sequence ALAAIGLIWGLSLLFSGPYLS. Over 163–187 the chain is Extracellular; that stretch reads YYRQSQLANLTVCHPAWSAPRRRAM. A helical transmembrane segment spans residues 188 to 208; the sequence is DICTFVFSYLLPVLVLGLTYA. Residues 209-237 are Cytoplasmic-facing; that stretch reads RTLRYLWRAVDPVAAGSGARRAKRKVTRM. A helical membrane pass occupies residues 238–258; the sequence is ILIVAALFCLCWMPHHALILC. The Extracellular portion of the chain corresponds to 259-260; that stretch reads VW. Residues 261-281 traverse the membrane as a helical segment; the sequence is FGQFPLTRATYALRILSHLVS. Over 282 to 387 the chain is Cytoplasmic; sequence YANSCVNPIV…GDSILTVDVA (106 aa).

The protein belongs to the G-protein coupled receptor 1 family. Expressed abundantly within the central nervous system in both hypothalamus and hippocampus. In peripheral tissues, the strongest expression was observed in heart, kidney, liver, and small intestine.

The protein localises to the cell membrane. Its function is as follows. Receptor for the hormone galanin and GALP. Receptor for the hormone spexin-1. The activity of this receptor is mediated by G proteins that activate the phospholipase C/protein kinase C pathway (via G(q)) and that inhibit adenylyl cyclase (via G(i)). In Homo sapiens (Human), this protein is Galanin receptor type 2 (GALR2).